The chain runs to 296 residues: MQIRRKHPNPAVKVESLSYVVKVPEAQPQNILEEIVWHKEIEVDKLRERLPLLELRQKIANTAPPCDFLAALKQGKTQPALIAEVKKASPSKGVILEDFDPVAIARTYEQGGATCLSVLTDSKFFQGSYENLTLVRQAVSLPLLCKEFILYPYQIYYARSKGADAVLLIAAILSDQDLAYFVKIVKGLGMTALVEVHSLAEFDRVLAIEGIELIGINNRNLETFTVDLDNTRQLLEARGEQVREKGILIVSESGLHTATDLAKVKQAGANAVLIGESLVKLPDPALGIQKLFENLG.

It belongs to the TrpC family.

The catalysed reaction is 1-(2-carboxyphenylamino)-1-deoxy-D-ribulose 5-phosphate + H(+) = (1S,2R)-1-C-(indol-3-yl)glycerol 3-phosphate + CO2 + H2O. The protein operates within amino-acid biosynthesis; L-tryptophan biosynthesis; L-tryptophan from chorismate: step 4/5. The protein is Indole-3-glycerol phosphate synthase of Microcystis aeruginosa (strain NIES-843 / IAM M-2473).